Consider the following 123-residue polypeptide: ATP synthase epsilon chain (123 aa).

The protein belongs to the ATPase epsilon chain family. F-type ATPases have 2 components, CF(1) - the catalytic core - and CF(0) - the membrane proton channel. CF(1) has five subunits: alpha(3), beta(3), gamma(1), delta(1), epsilon(1). CF(0) has three main subunits: a, b and c.

Its subcellular location is the cell membrane. In terms of biological role, produces ATP from ADP in the presence of a proton gradient across the membrane. The polypeptide is ATP synthase epsilon chain (Corynebacterium diphtheriae (strain ATCC 700971 / NCTC 13129 / Biotype gravis)).